Reading from the N-terminus, the 346-residue chain is Phosphoribosylformylglycinamidine cyclo-ligase (346 aa).

This sequence belongs to the AIR synthase family.

The protein localises to the cytoplasm. It carries out the reaction 2-formamido-N(1)-(5-O-phospho-beta-D-ribosyl)acetamidine + ATP = 5-amino-1-(5-phospho-beta-D-ribosyl)imidazole + ADP + phosphate + H(+). The protein operates within purine metabolism; IMP biosynthesis via de novo pathway; 5-amino-1-(5-phospho-D-ribosyl)imidazole from N(2)-formyl-N(1)-(5-phospho-D-ribosyl)glycinamide: step 2/2. The chain is Phosphoribosylformylglycinamidine cyclo-ligase from Bacillus thuringiensis subsp. konkukian (strain 97-27).